The following is a 37-amino-acid chain: uncharacterized protein (37 aa).

The chain crosses the membrane as a helical span at residues Thr13–Leu33.

Its subcellular location is the host membrane. This is an uncharacterized protein from Acidianus convivator (ABV).